The primary structure comprises 602 residues: MKPYKIENIRNFSIIAHIDHGKSTIADRLLESTSTIEQREMREQLLDSMDLERERGITIKAHPVTMTYEYEGETYELNLIDTPGHVDFSYEVSRSLAACEGALLIVDAAQGVQAQSLANVYLALERDLEIIPVLNKIDLPAAQPEAIKKQIEEFIGLDTSNAIACSAKTGQGIPEILESIIRLVPPPKPSQETELKALIFDSHYDPYVGIMVYVRVISGEIKKGDRITFMSTKGSSFEVLGIGAFLPEATLIEGSLRAGQVGYFIANLKKVKDVKIGDTVTTVKHPAKEPLEGFKEIKPVVFAGIYPIDSSDFDTLKDALGRLQLNDSALTIEQESSHSLGFGFRCGFLGLLHLEIIFERISREFDLDIIATAPSVIYKVVLKNGKTLFIDNPTAYPDPALIEHMEEPWVHVNIITPQEYLSNIMSLCMDKRGICLKTDMLDQHRLVLSYELPLNEIVSDFNDKLKSVTKGYGSFDYRLGDYKPGAIIKLEILINDETVDAFSCLVHRDKAESKGRSICEKLVDVIPPQLFKIPIQAAINKKIIARETIRALAKNVTAKCYGGDITRKRKLWEKQKKGKKRMKEFGKVSIPNTAFVEVLKME.

A tr-type G domain is found at 7–188; sequence ENIRNFSIIA…SIIRLVPPPK (182 aa). Residues 19 to 24 and 135 to 138 contribute to the GTP site; these read DHGKST and NKID.

The protein belongs to the TRAFAC class translation factor GTPase superfamily. Classic translation factor GTPase family. LepA subfamily.

It localises to the cell inner membrane. The catalysed reaction is GTP + H2O = GDP + phosphate + H(+). Functionally, required for accurate and efficient protein synthesis under certain stress conditions. May act as a fidelity factor of the translation reaction, by catalyzing a one-codon backward translocation of tRNAs on improperly translocated ribosomes. Back-translocation proceeds from a post-translocation (POST) complex to a pre-translocation (PRE) complex, thus giving elongation factor G a second chance to translocate the tRNAs correctly. Binds to ribosomes in a GTP-dependent manner. The polypeptide is Elongation factor 4 (Chlamydia muridarum (strain MoPn / Nigg)).